A 306-amino-acid polypeptide reads, in one-letter code: Homeobox protein Hox-C13a (306 aa).

The homeobox DNA-binding region spans 236–295 (GRKKRVPYTKIQLKELEKEYAASKFITKDKRRRISATTNLSERQVTIWFQNRRVKEKKFV).

Belongs to the Abd-B homeobox family.

Its subcellular location is the nucleus. Its function is as follows. Sequence-specific transcription factor which is part of a developmental regulatory system that provides cells with specific positional identities on the anterior-posterior axis. The polypeptide is Homeobox protein Hox-C13a (hoxc13a) (Danio rerio (Zebrafish)).